A 161-amino-acid polypeptide reads, in one-letter code: Nucleotide-binding protein BceJ2315_27070 (161 aa).

It belongs to the YajQ family.

In terms of biological role, nucleotide-binding protein. This is Nucleotide-binding protein BceJ2315_27070 from Burkholderia cenocepacia (strain ATCC BAA-245 / DSM 16553 / LMG 16656 / NCTC 13227 / J2315 / CF5610) (Burkholderia cepacia (strain J2315)).